The primary structure comprises 446 residues: tRNA modification GTPase MnmE (446 aa).

(6S)-5-formyl-5,6,7,8-tetrahydrofolate is bound by residues R24, E81, and K120. One can recognise a TrmE-type G domain in the interval 216–368 (GLHAVLIGPP…LHTRLRELAL (153 aa)). Position 226 (N226) interacts with K(+). GTP is bound by residues 226-231 (NAGKSS), 245-251 (TDVAGTT), and 270-273 (DTAG). S230 serves as a coordination point for Mg(2+). T245, V247, and T250 together coordinate K(+). Residue T251 coordinates Mg(2+). K446 contributes to the (6S)-5-formyl-5,6,7,8-tetrahydrofolate binding site.

Belongs to the TRAFAC class TrmE-Era-EngA-EngB-Septin-like GTPase superfamily. TrmE GTPase family. Homodimer. Heterotetramer of two MnmE and two MnmG subunits. It depends on K(+) as a cofactor.

It localises to the cytoplasm. Functionally, exhibits a very high intrinsic GTPase hydrolysis rate. Involved in the addition of a carboxymethylaminomethyl (cmnm) group at the wobble position (U34) of certain tRNAs, forming tRNA-cmnm(5)s(2)U34. This chain is tRNA modification GTPase MnmE, found in Xanthomonas campestris pv. campestris (strain 8004).